The following is a 442-amino-acid chain: Proline--tRNA ligase (442 aa).

It belongs to the class-II aminoacyl-tRNA synthetase family. ProS type 2 subfamily. In terms of assembly, homodimer.

The protein localises to the cytoplasm. It carries out the reaction tRNA(Pro) + L-proline + ATP = L-prolyl-tRNA(Pro) + AMP + diphosphate. Functionally, catalyzes the attachment of proline to tRNA(Pro) in a two-step reaction: proline is first activated by ATP to form Pro-AMP and then transferred to the acceptor end of tRNA(Pro). This Brucella canis (strain ATCC 23365 / NCTC 10854 / RM-666) protein is Proline--tRNA ligase.